Here is a 193-residue protein sequence, read N- to C-terminus: dCTP deaminase (193 aa).

DCTP is bound by residues 110–115 (RSSLAR), aspartate 128, 136–138 (VLE), tyrosine 171, lysine 178, and glutamine 182. Residue glutamate 138 is the Proton donor/acceptor of the active site.

This sequence belongs to the dCTP deaminase family. Homotrimer.

The catalysed reaction is dCTP + H2O + H(+) = dUTP + NH4(+). It functions in the pathway pyrimidine metabolism; dUMP biosynthesis; dUMP from dCTP (dUTP route): step 1/2. In terms of biological role, catalyzes the deamination of dCTP to dUTP. The chain is dCTP deaminase from Buchnera aphidicola subsp. Acyrthosiphon pisum (strain APS) (Acyrthosiphon pisum symbiotic bacterium).